The following is a 472-amino-acid chain: 3-isopropylmalate dehydratase large subunit (472 aa).

Positions 61–80 (TPDHNVPTTQKERASGVEGI) are disordered. Cys353, Cys414, and Cys417 together coordinate [4Fe-4S] cluster.

It belongs to the aconitase/IPM isomerase family. LeuC type 1 subfamily. Heterodimer of LeuC and LeuD. [4Fe-4S] cluster is required as a cofactor.

The catalysed reaction is (2R,3S)-3-isopropylmalate = (2S)-2-isopropylmalate. It functions in the pathway amino-acid biosynthesis; L-leucine biosynthesis; L-leucine from 3-methyl-2-oxobutanoate: step 2/4. Its function is as follows. Catalyzes the isomerization between 2-isopropylmalate and 3-isopropylmalate, via the formation of 2-isopropylmaleate. The protein is 3-isopropylmalate dehydratase large subunit of Saccharophagus degradans (strain 2-40 / ATCC 43961 / DSM 17024).